The primary structure comprises 311 residues: Ribosomal protein L11 methyltransferase (311 aa).

Positions 163, 184, 206, and 248 each coordinate S-adenosyl-L-methionine.

Belongs to the methyltransferase superfamily. PrmA family.

The protein localises to the cytoplasm. It catalyses the reaction L-lysyl-[protein] + 3 S-adenosyl-L-methionine = N(6),N(6),N(6)-trimethyl-L-lysyl-[protein] + 3 S-adenosyl-L-homocysteine + 3 H(+). Methylates ribosomal protein L11. In Clostridium acetobutylicum (strain ATCC 824 / DSM 792 / JCM 1419 / IAM 19013 / LMG 5710 / NBRC 13948 / NRRL B-527 / VKM B-1787 / 2291 / W), this protein is Ribosomal protein L11 methyltransferase.